A 266-amino-acid chain; its full sequence is Type II iodothyronine deiodinase (266 aa).

Over 1–9 (MGLLSVDLL) the chain is Lumenal. Residues 10 to 34 (ITLQILPVFFSNCLFLALYDSVILL) form a helical; Signal-anchor for type III membrane protein membrane-spanning segment. The Cytoplasmic portion of the chain corresponds to 35 to 266 (KHVALLLSRS…KNFSKRUILD (232 aa)). The active site involves Sec-130. Non-standard amino acids (selenocysteine) are located at Sec-130 and Sec-263.

Belongs to the iodothyronine deiodinase family. Predominantly monomer. Can form homodimers but homodimerization is not essential for enzyme activity. Interacts with USP20 and USP33. Interacts with MARCHF6. In terms of processing, ubiquitinated by MARCHF6, leading to its degradation by the proteasome. Deubiquitinated by USP20 and USP33. As to expression, expressed in cerebral cortex, cerebellum, pituitary gland, mostly in anterior pituitary gland, and pineal gland, as well as in brown adipose tissue (BAT).

It is found in the endoplasmic reticulum membrane. The enzyme catalyses 3,3',5-triiodo-L-thyronine + iodide + A + H(+) = L-thyroxine + AH2. It carries out the reaction 3,3'-diiodo-L-thyronine + iodide + A + H(+) = 3,3',5'-triiodo-L-thyronine + AH2. It catalyses the reaction 3'-iodo-L-thyronine + iodide + A + H(+) = 3',5'-diiodo-L-thyronine + AH2. The catalysed reaction is 3,3'-diiodothyronamine + iodide + A + H(+) = 3,3',5'-triiodothyronamine + AH2. The enzyme catalyses 3'-iodothyronamine + iodide + A + H(+) = 3',5'-diiodothyronamine + AH2. Its function is as follows. Plays a crucial role in the metabolism of thyroid hormones (TH) and has specific roles in TH activation and inactivation by deiodination. Catalyzes the deiodination of L-thyroxine (T4) to 3,5,3'-triiodothyronine (T3) and 3',5'-diiodothyronine (3',5'-T2) to 3'-monoiodothyronine (3'-T1) via outer-ring deiodination (ORD). Catalyzes the deiodination of 3,3',5'-triiodothyronine (rT3) to 3,3'-diiodothyronine (3,3'-T2) via ORD. Catalyzes the phenolic ring deiodinations of 3,3',5'-triiodothyronamine and 3',5'- diiodothyronamine. This is Type II iodothyronine deiodinase (Dio2) from Rattus norvegicus (Rat).